The following is a 299-amino-acid chain: Nucleoporin POM34 (299 aa).

The disordered stretch occupies residues 1-39 (MKIQAGQLGLDDNDVPGPLPDTDSKPSSQSQNDTPMFKL). Polar residues predominate over residues 25–34 (KPSSQSQNDT). A run of 2 helical transmembrane segments spans residues 64–84 (IMTNVIAFAFWNLLVKFIKFF) and 133–153 (LFHLLISLNILFSLWKLLSTV). Position 270 is a phosphoserine (S270). Residue T273 is modified to Phosphothreonine. 2 positions are modified to phosphoserine: S292 and S294.

As to quaternary structure, component of the nuclear pore complex (NPC). NPC constitutes the exclusive means of nucleocytoplasmic transport. NPCs allow the passive diffusion of ions and small molecules and the active, nuclear transport receptor-mediated bidirectional transport of macromolecules such as proteins, RNAs, ribonucleoparticles (RNPs), and ribosomal subunits across the nuclear envelope. Due to its 8-fold rotational symmetry, all subunits are present with 8 copies or multiples thereof.

The protein localises to the nucleus. It localises to the nuclear pore complex. It is found in the nucleus membrane. In terms of biological role, functions as a component of the nuclear pore complex (NPC). NPC components, collectively referred to as nucleoporins (NUPs), can play the role of both NPC structural components and of docking or interaction partners for transiently associated nuclear transport factors. The protein is Nucleoporin POM34 (POM34) of Saccharomyces cerevisiae (strain ATCC 204508 / S288c) (Baker's yeast).